The sequence spans 83 residues: Small ribosomal subunit protein bS16 (83 aa).

It belongs to the bacterial ribosomal protein bS16 family.

This chain is Small ribosomal subunit protein bS16, found in Shewanella amazonensis (strain ATCC BAA-1098 / SB2B).